Here is a 268-residue protein sequence, read N- to C-terminus: Undecaprenyl-diphosphatase (268 aa).

A run of 7 helical transmembrane segments spans residues Pro41–Phe61, Ile89–Tyr109, Ile114–Ile134, Leu155–Ile175, Phe191–Ser211, Phe218–Ile238, and Asn248–Leu268.

Belongs to the UppP family.

It localises to the cell inner membrane. It carries out the reaction di-trans,octa-cis-undecaprenyl diphosphate + H2O = di-trans,octa-cis-undecaprenyl phosphate + phosphate + H(+). Its function is as follows. Catalyzes the dephosphorylation of undecaprenyl diphosphate (UPP). Confers resistance to bacitracin. This is Undecaprenyl-diphosphatase from Prochlorococcus marinus (strain MIT 9312).